Here is a 94-residue protein sequence, read N- to C-terminus: Large ribosomal subunit protein uL23 (94 aa).

Belongs to the universal ribosomal protein uL23 family. Part of the 50S ribosomal subunit. Contacts protein L29, and trigger factor when it is bound to the ribosome.

Functionally, one of the early assembly proteins it binds 23S rRNA. One of the proteins that surrounds the polypeptide exit tunnel on the outside of the ribosome. Forms the main docking site for trigger factor binding to the ribosome. This chain is Large ribosomal subunit protein uL23, found in Roseiflexus sp. (strain RS-1).